Reading from the N-terminus, the 254-residue chain is UstYa family oxidase phomYc' (254 aa).

The helical transmembrane segment at 38-58 (LVLVLQSVLIISLLASLHILG) threads the bilayer. The N-linked (GlcNAc...) asparagine glycan is linked to Asn-64. The HXXHC 1 signature appears at 138 to 142 (HQLHC). A glycan (N-linked (GlcNAc...) asparagine) is linked at Asn-159. An HXXHC 2 motif is present at residues 173-177 (HIDHC).

It belongs to the ustYa family.

It is found in the membrane. Its pathway is mycotoxin biosynthesis. Functionally, ustYa family oxidase; part of the gene cluster that mediates the biosynthesis of the phomopsins, a group of hexapeptide mycotoxins which infects lupins and causes lupinosis disease in livestock. Within the pathway, phomYc' catalyzes the desaturation of the Ile moiety into 2,3-dehydroisoleucine (dIle). The pathway starts with the processing of the precursor phomA' by several endopeptidases including kexin proteases as well as the cluster-specific S41 family peptidase phomP1 and the oligopeptidase phomG' to produce 10 identical copies of the hexapeptide Tyr-Val-Ile-Pro-Ile-Asp. After being excised from the precursor peptide, the core peptides are cyclized and modified post-translationally by enzymes encoded within the gene cluster. The timing and order of proteolysis of the phomA' precursor and PTMs are still unknown. Two tyrosinase-like enzymes, phomQ1' and phomQ2, catalyze the chlorination and hydroxylation of Tyr, respectively. PhomYb, is proposed to be involved in the construction of the macrocyclic structure. The other 4 ustYa family proteins may be involved in PTMs that generate the unique structure of phomopsin A. PhomYa' is required for the hydroxylation of C-beta of Tyr. PhomYc', phomYd', and phomYe are responsible for the biosynthesis of 2,3-dehydroisoleucine (dIle), 2,3-dehydroaspartic acid (dAsp), and 3,4-dehydroproline (dPro), respectively. While dIle formation by phomYc' is indispensable for the installation of dAsp by phomYd', the order of the other PTMs have not been elucidated yet. Most of the biosynthetic enzymes likely have broad substrate specificity, and thus, there might be a metabolic grid from a precursor to phomopsin A. The enzyme(s) responsible for the biosynthesis of 3,4-dehydrovaline (dVal) have also not been identified yet. Finally, phomM' acts as an S-adenosylmethionine-dependent alpha-N-methyltransferase that catalyzes two successive N-methylation reactions, converting N-desmethyl-phomopsin A to phomopsin A and phomopsin A further to an N,N-dimethylated congener called phomopsin E. In Diaporthe leptostromiformis (Lupinosis disease fungus), this protein is UstYa family oxidase phomYc'.